Here is a 334-residue protein sequence, read N- to C-terminus: Protein-methionine-sulfoxide reductase catalytic subunit MsrP (334 aa).

A signal peptide (tat-type signal) is located at residues 1–44 (MKKNQFLKESDVTAESVFFMKRRQVLKALGISAAALSLPHAAHA). Residues Asn-88, 91–92 (YE), Cys-146, Thr-181, Asn-233, Arg-238, and 249–251 (GIK) contribute to the Mo-molybdopterin site.

The protein belongs to the MsrP family. Heterodimer of a catalytic subunit (MsrP) and a heme-binding subunit (MsrQ). It depends on Mo-molybdopterin as a cofactor. Predicted to be exported by the Tat system. The position of the signal peptide cleavage has not been experimentally proven.

Its subcellular location is the periplasm. It carries out the reaction L-methionyl-[protein] + a quinone + H2O = L-methionyl-(S)-S-oxide-[protein] + a quinol. The catalysed reaction is L-methionyl-[protein] + a quinone + H2O = L-methionyl-(R)-S-oxide-[protein] + a quinol. In terms of biological role, part of the MsrPQ system that repairs oxidized periplasmic proteins containing methionine sulfoxide residues (Met-O), using respiratory chain electrons. Thus protects these proteins from oxidative-stress damage caused by reactive species of oxygen and chlorine generated by the host defense mechanisms. MsrPQ is essential for the maintenance of envelope integrity under bleach stress, rescuing a wide series of structurally unrelated periplasmic proteins from methionine oxidation, including the primary periplasmic chaperone SurA and the lipoprotein Pal. The catalytic subunit MsrP is non-stereospecific, being able to reduce both (R-) and (S-) diastereoisomers of methionine sulfoxide. In Escherichia coli O81 (strain ED1a), this protein is Protein-methionine-sulfoxide reductase catalytic subunit MsrP.